Consider the following 483-residue polypeptide: Malonate-semialdehyde dehydrogenase 2 (483 aa).

Positions 152, 176, 179, 180, and 229 each coordinate NAD(+). Residue C284 is the Nucleophile of the active site. E384 lines the NAD(+) pocket.

The protein belongs to the aldehyde dehydrogenase family. IolA subfamily. In terms of assembly, homotetramer.

It carries out the reaction 3-oxopropanoate + NAD(+) + CoA + H2O = hydrogencarbonate + acetyl-CoA + NADH + H(+). It catalyses the reaction 2-methyl-3-oxopropanoate + NAD(+) + CoA + H2O = propanoyl-CoA + hydrogencarbonate + NADH + H(+). Its pathway is polyol metabolism; myo-inositol degradation into acetyl-CoA; acetyl-CoA from myo-inositol: step 7/7. In terms of biological role, catalyzes the oxidation of malonate semialdehyde (MSA) and methylmalonate semialdehyde (MMSA) into acetyl-CoA and propanoyl-CoA, respectively. Is involved in a myo-inositol catabolic pathway. Bicarbonate, and not CO2, is the end-product of the enzymatic reaction. This chain is Malonate-semialdehyde dehydrogenase 2, found in Bacillus mycoides (strain KBAB4) (Bacillus weihenstephanensis).